Consider the following 110-residue polypeptide: BolA-like protein 3 (110 aa).

It belongs to the BolA/IbaG family. In terms of assembly, interacts with NFU1.

The protein resides in the mitochondrion. Acts as a mitochondrial iron-sulfur (Fe-S) cluster assembly factor that facilitates (Fe-S) cluster insertion into a subset of mitochondrial proteins. Probably acts together with NFU1. This Mus musculus (Mouse) protein is BolA-like protein 3 (Bola3).